The sequence spans 326 residues: Pyruvate dehydrogenase E1 component subunit beta (326 aa).

Residue Glu62 participates in thiamine diphosphate binding.

Heterodimer of an alpha and a beta chain. Requires thiamine diphosphate as cofactor.

It catalyses the reaction N(6)-[(R)-lipoyl]-L-lysyl-[protein] + pyruvate + H(+) = N(6)-[(R)-S(8)-acetyldihydrolipoyl]-L-lysyl-[protein] + CO2. In terms of biological role, the pyruvate dehydrogenase complex catalyzes the overall conversion of pyruvate to acetyl-CoA and CO(2). It contains multiple copies of three enzymatic components: pyruvate dehydrogenase (E1), dihydrolipoamide acetyltransferase (E2) and lipoamide dehydrogenase (E3). This Mycoplasma genitalium (strain ATCC 33530 / DSM 19775 / NCTC 10195 / G37) (Mycoplasmoides genitalium) protein is Pyruvate dehydrogenase E1 component subunit beta (pdhB).